Here is a 747-residue protein sequence, read N- to C-terminus: Small G protein signaling modulator 3 (747 aa).

The Rab-GAP TBC domain occupies 111-302 (GVPHSMRPQL…RLWDLFFYEG (192 aa)). S403 is subject to Phosphoserine. Residues 412–435 (EDDLEAMKAKNIKQTELVADLREA) adopt a coiled-coil conformation. The region spanning 477-536 (GHPRRAKALLDFERHDDDELGFRKNDIITIVSQKDEHCWVGELNGLRGWFPAKFVEVLDE) is the SH3 domain. The RUN domain maps to 552–715 (GVTDLVRGTL…FAFSLSQDWE (164 aa)).

This sequence belongs to the small G protein signaling modulator family. In terms of assembly, interacts with GJA1. Interaction with GJA1 induces its degradation. Interacts via its RUN domain with the C-terminal region of NF2. Interacts with RAB3A, RAB4A, RAB5A, RAB8A, RAB11A, RAP1A, RAP1B, RAP2A, RAP2B and PDCD6I. No interaction with RAB27A.

The protein resides in the cytoplasm. In terms of biological role, may play a cooperative role in NF2-mediated growth suppression of cells. The sequence is that of Small G protein signaling modulator 3 from Bos taurus (Bovine).